Here is a 316-residue protein sequence, read N- to C-terminus: Acetyl-coenzyme A carboxylase carboxyl transferase subunit alpha (316 aa).

Positions 39-293 (RLQDKSHALT…RQTLLAQLES (255 aa)) constitute a CoA carboxyltransferase C-terminal domain.

Belongs to the AccA family. As to quaternary structure, acetyl-CoA carboxylase is a heterohexamer composed of biotin carboxyl carrier protein (AccB), biotin carboxylase (AccC) and two subunits each of ACCase subunit alpha (AccA) and ACCase subunit beta (AccD).

The protein localises to the cytoplasm. The catalysed reaction is N(6)-carboxybiotinyl-L-lysyl-[protein] + acetyl-CoA = N(6)-biotinyl-L-lysyl-[protein] + malonyl-CoA. The protein operates within lipid metabolism; malonyl-CoA biosynthesis; malonyl-CoA from acetyl-CoA: step 1/1. Component of the acetyl coenzyme A carboxylase (ACC) complex. First, biotin carboxylase catalyzes the carboxylation of biotin on its carrier protein (BCCP) and then the CO(2) group is transferred by the carboxyltransferase to acetyl-CoA to form malonyl-CoA. The sequence is that of Acetyl-coenzyme A carboxylase carboxyl transferase subunit alpha from Azotobacter vinelandii (strain DJ / ATCC BAA-1303).